The primary structure comprises 146 residues: Hemoglobin subunit beta (146 aa).

At Val1 the chain carries N-acetylvaline. The Globin domain occupies 2–146 (HLTAEEKSLV…VANALAHKYH (145 aa)). Residue Thr12 is modified to Phosphothreonine. A Phosphoserine modification is found at Ser44. Lys59 is subject to N6-acetyllysine. His63 provides a ligand contact to heme b. At Lys82 the chain carries N6-acetyllysine. His92 is a binding site for heme b. Residue Cys93 is modified to S-nitrosocysteine. The residue at position 144 (Lys144) is an N6-acetyllysine.

This sequence belongs to the globin family. As to quaternary structure, heterotetramer of two alpha chains and two beta chains. In terms of tissue distribution, red blood cells.

Involved in oxygen transport from the lung to the various peripheral tissues. The polypeptide is Hemoglobin subunit beta (HBB) (Vulpes vulpes (Red fox)).